Reading from the N-terminus, the 369-residue chain is Histone deacetylase-like amidohydrolase (369 aa).

H143 (proton donor/acceptor) is an active-site residue. Positions 180, 182, and 268 each coordinate Zn(2+).

This sequence belongs to the histone deacetylase family. Homotetramer; dimer of dimers. It depends on Zn(2+) as a cofactor.

Zinc, and cobalt and nickel at a lesser extent, are able to increase the catalytic activity (2.2-, 1.3- and 1.1-fold respectively) at concentrations of 1 mM. Higher concentrations have an inhibitory effect. Magnesium, manganese and calcium have no effect on activity at concentrations between 0 and 10 mM. At 100 mM, the catalytic activity is increased between 1.2- and 2.1-fold. Hydroxamates like TSA and SAHA inhibit the enzyme. Is also inhibited by azobenzenes, stilbenes and arylazopyrazoles. Exhibits significant levels of protein deacetylase activity comparable to those of eukaryotic HDACs in assays both with fluorogenic peptidic substrates and acetate-radiolabeled histones. Accepts proteins with epsilon-acetylated lysine residues and tritiated-acetate-prelabeled chicken histones as substrates. The natural substrate protein is not yet known. The polypeptide is Histone deacetylase-like amidohydrolase (hdaH) (Alcaligenes sp. (strain DSM 11172) (Bordetella sp. (strain FB188))).